Here is a 93-residue protein sequence, read N- to C-terminus: Phosphoribosyl-ATP pyrophosphatase (93 aa).

The protein belongs to the PRA-PH family.

The protein localises to the cytoplasm. The catalysed reaction is 1-(5-phospho-beta-D-ribosyl)-ATP + H2O = 1-(5-phospho-beta-D-ribosyl)-5'-AMP + diphosphate + H(+). Its pathway is amino-acid biosynthesis; L-histidine biosynthesis; L-histidine from 5-phospho-alpha-D-ribose 1-diphosphate: step 2/9. The protein is Phosphoribosyl-ATP pyrophosphatase (hisE) of Mycobacterium bovis (strain ATCC BAA-935 / AF2122/97).